Consider the following 174-residue polypeptide: uncharacterized protein (174 aa).

The interval 153 to 174 is disordered; the sequence is RSGNHSAGNVHPASPMIKVQGG.

This is an uncharacterized protein from Sinorhizobium fredii (strain NBRC 101917 / NGR234).